The chain runs to 242 residues: Zinc import ATP-binding protein ZnuC (242 aa).

One can recognise an ABC transporter domain in the interval 24–241 (INVENLSFFY…EKFLKMFSSY (218 aa)). Position 56–63 (56–63 (GPNGGGKT)) interacts with ATP.

This sequence belongs to the ABC transporter superfamily. Zinc importer (TC 3.A.1.15.5) family. The complex is composed of two ATP-binding proteins (ZnuC), two transmembrane proteins (ZnuB) and a solute-binding protein (ZnuA).

It is found in the cell inner membrane. The catalysed reaction is Zn(2+)(out) + ATP(in) + H2O(in) = Zn(2+)(in) + ADP(in) + phosphate(in) + H(+)(in). Its function is as follows. Part of the ABC transporter complex ZnuABC involved in zinc import. Responsible for energy coupling to the transport system. This is Zinc import ATP-binding protein ZnuC from Ehrlichia chaffeensis (strain ATCC CRL-10679 / Arkansas).